The primary structure comprises 137 residues: Phosphoribosyl-AMP cyclohydrolase (137 aa).

Residue Asp84 participates in Mg(2+) binding. Zn(2+) is bound at residue Cys85. Mg(2+)-binding residues include Asp86 and Asp88. The Zn(2+) site is built by Cys101 and Cys108.

Belongs to the PRA-CH family. Homodimer. Mg(2+) is required as a cofactor. It depends on Zn(2+) as a cofactor.

Its subcellular location is the cytoplasm. The catalysed reaction is 1-(5-phospho-beta-D-ribosyl)-5'-AMP + H2O = 1-(5-phospho-beta-D-ribosyl)-5-[(5-phospho-beta-D-ribosylamino)methylideneamino]imidazole-4-carboxamide. It functions in the pathway amino-acid biosynthesis; L-histidine biosynthesis; L-histidine from 5-phospho-alpha-D-ribose 1-diphosphate: step 3/9. Its function is as follows. Catalyzes the hydrolysis of the adenine ring of phosphoribosyl-AMP. The polypeptide is Phosphoribosyl-AMP cyclohydrolase (Chlorobaculum tepidum (strain ATCC 49652 / DSM 12025 / NBRC 103806 / TLS) (Chlorobium tepidum)).